Consider the following 291-residue polypeptide: U3 small nucleolar ribonucleoprotein protein IMP4 (291 aa).

In terms of domain architecture, Brix spans 83–264 (PKVMITTSRD…LYMIRLGTLE (182 aa)).

In terms of assembly, part of the small subunit (SSU) processome, composed of more than 70 proteins and the RNA chaperone small nucleolar RNA (snoRNA) U3. Component of a heterotrimeric complex containing IMP3, IMP4 and MPHOSPH10. Interacts with MPHOSPH10.

It localises to the nucleus. Its subcellular location is the nucleolus. Functionally, component of the 60-80S U3 small nucleolar ribonucleoprotein (U3 snoRNP). Required for the early cleavages during pre-18S ribosomal RNA processing. Part of the small subunit (SSU) processome, first precursor of the small eukaryotic ribosomal subunit. During the assembly of the SSU processome in the nucleolus, many ribosome biogenesis factors, an RNA chaperone and ribosomal proteins associate with the nascent pre-rRNA and work in concert to generate RNA folding, modifications, rearrangements and cleavage as well as targeted degradation of pre-ribosomal RNA by the RNA exosome. The sequence is that of U3 small nucleolar ribonucleoprotein protein IMP4 from Homo sapiens (Human).